Consider the following 287-residue polypeptide: Phosphoribosylaminoimidazole-succinocarboxamide synthase (287 aa).

It belongs to the SAICAR synthetase family.

It carries out the reaction 5-amino-1-(5-phospho-D-ribosyl)imidazole-4-carboxylate + L-aspartate + ATP = (2S)-2-[5-amino-1-(5-phospho-beta-D-ribosyl)imidazole-4-carboxamido]succinate + ADP + phosphate + 2 H(+). It participates in purine metabolism; IMP biosynthesis via de novo pathway; 5-amino-1-(5-phospho-D-ribosyl)imidazole-4-carboxamide from 5-amino-1-(5-phospho-D-ribosyl)imidazole-4-carboxylate: step 1/2. The protein is Phosphoribosylaminoimidazole-succinocarboxamide synthase of Neisseria meningitidis serogroup C (strain 053442).